A 621-amino-acid polypeptide reads, in one-letter code: Pentatricopeptide repeat-containing protein At1g12620 (621 aa).

PPR repeat units follow at residues 36–70 (GKVS…RPRP), 71–105 (RLID…GIAH), 106–140 (NLYT…GYEP), 141–175 (DTVT…GHKP), 176–210 (TLIT…GFQP), 211–245 (NEVT…KIKL), 246–280 (DAVK…GFKA), 281–315 (DIII…KITP), 316–350 (DVVA…GISP), 351–385 (DTVT…GCGP), 386–420 (NIRT…GVVA), 421–455 (DTVT…RVRP), 456–490 (DIVS…KMEL), 491–525 (DIGI…GVKP), 526–560 (DVKT…GHSP), and 561–595 (NGCT…GFSV).

It belongs to the PPR family. P subfamily.

This is Pentatricopeptide repeat-containing protein At1g12620 from Arabidopsis thaliana (Mouse-ear cress).